Consider the following 244-residue polypeptide: Probable transcriptional regulatory protein CHAB381_1426 (244 aa).

This sequence belongs to the TACO1 family.

The protein localises to the cytoplasm. This Campylobacter hominis (strain ATCC BAA-381 / DSM 21671 / CCUG 45161 / LMG 19568 / NCTC 13146 / CH001A) protein is Probable transcriptional regulatory protein CHAB381_1426.